An 83-amino-acid chain; its full sequence is U5-theraphotoxin-Hs1d (83 aa).

The first 21 residues, 1–21 (MKTSMFLTLTGLVLLFVVCYA), serve as a signal peptide directing secretion. The propeptide occupies 22–49 (SESEEKEFPKELLSSIFAADSDFKVEER). 3 disulfide bridges follow: C51–C63, C56–C68, and C62–C75.

The protein belongs to the neurotoxin 10 (Hwtx-1) family. 51 (Hntx-8) subfamily. Hntx-8 sub-subfamily. Expressed by the venom gland.

The protein localises to the secreted. Agglutinates erythrocytes. This chain is U5-theraphotoxin-Hs1d, found in Cyriopagopus schmidti (Chinese bird spider).